We begin with the raw amino-acid sequence, 109 residues long: Tyrosine-protein phosphatase 4 (109 aa).

Residues Ser-1–Ile-109 form the Tyrosine-protein phosphatase domain. Glu-78 serves as a coordination point for substrate.

The protein belongs to the protein-tyrosine phosphatase family.

It carries out the reaction O-phospho-L-tyrosyl-[protein] + H2O = L-tyrosyl-[protein] + phosphate. The chain is Tyrosine-protein phosphatase 4 (STY-4) from Styela plicata (Wrinkled sea squirt).